Consider the following 224-residue polypeptide: Deoxyguanosine kinase (224 aa).

8 to 16 (GPIGAGKSS) contributes to the ATP binding site. Positions 32, 44, and 55 each coordinate substrate. Asp78 functions as the Proton acceptor in the catalytic mechanism. 3 residues coordinate substrate: Arg79, Asp84, and Glu149.

It belongs to the DCK/DGK family. Heterodimer of a deoxyadenosine (DAK) and a deoxyguanosine kinase (DGK).

The catalysed reaction is 2'-deoxyguanosine + ATP = dGMP + ADP + H(+). DGK/DAK plays an essential role in generating the deoxyribonucleotide precursors, dGTP and dATP, for DNA metabolism. This chain is Deoxyguanosine kinase, found in Lactobacillus johnsonii (strain CNCM I-12250 / La1 / NCC 533).